A 140-amino-acid chain; its full sequence is Nucleoside diphosphate kinase (140 aa).

Residues K11, F59, R87, T93, R104, and N114 each coordinate ATP. Catalysis depends on H117, which acts as the Pros-phosphohistidine intermediate.

This sequence belongs to the NDK family. Homotetramer. The cofactor is Mg(2+).

The protein resides in the cytoplasm. The enzyme catalyses a 2'-deoxyribonucleoside 5'-diphosphate + ATP = a 2'-deoxyribonucleoside 5'-triphosphate + ADP. It carries out the reaction a ribonucleoside 5'-diphosphate + ATP = a ribonucleoside 5'-triphosphate + ADP. Functionally, major role in the synthesis of nucleoside triphosphates other than ATP. The ATP gamma phosphate is transferred to the NDP beta phosphate via a ping-pong mechanism, using a phosphorylated active-site intermediate. In Cereibacter sphaeroides (strain ATCC 17029 / ATH 2.4.9) (Rhodobacter sphaeroides), this protein is Nucleoside diphosphate kinase.